The following is a 418-amino-acid chain: MHIFDELKERGLIFQTTDEEALRKALEEGQVSYYTGYDPTADSLHLGHLVAILTSRRLQLAGHKPYALVGGATGLIGDPSFKDAERSLQTKDTVDGWVKSIQGQLSRFLDFENGENKAVMVNNYDWFGSISFIDFLRDIGKYFTVNYMMSKESVKKRIETGISYTEFAYQIMQGYDFFVLNQDHNVTLQIGGSDQWGNMTAGTELLRRKADKTGHVITVPLITDATGKKFGKSEGNAVWLNPEKTSPYEMYQFWMNVMDADAIRFLKIFTFLSLDEIEDIRKQFEAAPHERLAQKVLAREVVTLVHGEEAYKEALNITEQLFAGNIKNLSVKELKQGLRGVPNYQVQADENNNIVELLVSSGIVNSKRQAREDVQNGAIYVNGDRIQDLDYVLSDADKLENELTVIRRGKKKYFVLTY.

Y34 contributes to the L-tyrosine binding site. Positions 39–48 (PTADSLHLGH) match the 'HIGH' region motif. Positions 169 and 173 each coordinate L-tyrosine. The 'KMSKS' region motif lies at 229-233 (KFGKS). Residue K232 participates in ATP binding. The 67-residue stretch at 352 to 418 (NNIVELLVSS…GKKKYFVLTY (67 aa)) folds into the S4 RNA-binding domain.

This sequence belongs to the class-I aminoacyl-tRNA synthetase family. TyrS type 1 subfamily. In terms of assembly, homodimer.

It is found in the cytoplasm. The catalysed reaction is tRNA(Tyr) + L-tyrosine + ATP = L-tyrosyl-tRNA(Tyr) + AMP + diphosphate + H(+). Its function is as follows. Catalyzes the attachment of tyrosine to tRNA(Tyr) in a two-step reaction: tyrosine is first activated by ATP to form Tyr-AMP and then transferred to the acceptor end of tRNA(Tyr). This Streptococcus pneumoniae (strain CGSP14) protein is Tyrosine--tRNA ligase.